A 180-amino-acid chain; its full sequence is Protein SPMIP9 (180 aa).

As to quaternary structure, microtubule inner protein component of sperm flagellar doublet microtubules.

The protein localises to the nucleus. It localises to the cytoplasm. The protein resides in the cytoskeleton. Its subcellular location is the flagellum axoneme. Microtubule inner protein (MIP) part of the dynein-decorated doublet microtubules (DMTs) in flagella axoneme. The polypeptide is Protein SPMIP9 (SPMIP9) (Bos taurus (Bovine)).